A 441-amino-acid polypeptide reads, in one-letter code: VGFKAGVKDYKLTYYTPDYETKDTDILAAFRVTPQPGVPPEEAGAAVAAESSTGTWTTVWTDGLTSLDRYKGRCYHIEPVAGEENQYIAYVAYPLDLFEEGSVTNMFTSIVGNVFGFKALRALRLEDLRIPPAYSKTFQGPPHGIQVERDKLNKYGRPLLGCTIKPKLGLSAKNYGRAVYECLRGGLDFTKDDENVNSQPFMRWRDRFLFCAEAIYKAQAETGEIKGHYLNATAGTCEEMIKRAVFARELGVPIVMHDYLTGGFTANTSLSHYCRDNGLLLHIHRAMHAVIDRQKNHGIHFRVLAKALRMSGGDHIHSGTVVGKLEGERDITLGFVDLLRDDYIEKDRARGIYFSQDWVSLPGVLPVASGGIHVWHMPALTEIFGDDSVLQFGGGTLGHPWGNAPGAVANRVALEACVQARNEGRDLAREGNEIIREARKW.

N6,N6,N6-trimethyllysine is present on lysine 4. Substrate-binding residues include asparagine 113 and threonine 163. Lysine 165 (proton acceptor) is an active-site residue. Lysine 167 serves as a coordination point for substrate. The Mg(2+) site is built by lysine 191, aspartate 193, and glutamate 194. Lysine 191 carries the post-translational modification N6-carboxylysine. Residue histidine 284 is the Proton acceptor of the active site. Residues arginine 285, histidine 317, and serine 369 each contribute to the substrate site.

It belongs to the RuBisCO large chain family. Type I subfamily. In terms of assembly, heterohexadecamer of 8 large chains and 8 small chains; disulfide-linked. The disulfide link is formed within the large subunit homodimers. The cofactor is Mg(2+). In terms of processing, the disulfide bond which can form in the large chain dimeric partners within the hexadecamer appears to be associated with oxidative stress and protein turnover.

The protein localises to the plastid. It is found in the chloroplast. The catalysed reaction is 2 (2R)-3-phosphoglycerate + 2 H(+) = D-ribulose 1,5-bisphosphate + CO2 + H2O. The enzyme catalyses D-ribulose 1,5-bisphosphate + O2 = 2-phosphoglycolate + (2R)-3-phosphoglycerate + 2 H(+). Its function is as follows. RuBisCO catalyzes two reactions: the carboxylation of D-ribulose 1,5-bisphosphate, the primary event in carbon dioxide fixation, as well as the oxidative fragmentation of the pentose substrate in the photorespiration process. Both reactions occur simultaneously and in competition at the same active site. In Darlingtonia californica (California pitcher plant), this protein is Ribulose bisphosphate carboxylase large chain.